A 413-amino-acid chain; its full sequence is Palmitoyltransferase ZDHHC6 (413 aa).

Over 1 to 24 (MGIFCSVIKFENLQDLRRLCHWGP) the chain is Cytoplasmic. The helical transmembrane segment at 25–45 (IIALGVIAICSTMAMIDSVLW) threads the bilayer. At 46–57 (YWPLHTTGGSVN) the chain is on the lumenal side. The helical transmembrane segment at 58 to 78 (FIMLINWTVMILYNYFNAMFA) threads the bilayer. Residues 79-143 (GPGFVPRGWK…NCCGHQNHAS (65 aa)) are Cytoplasmic-facing. A DHHC domain is found at 99–149 (QYCKVCQAYKAPRSHHCRKCNRCVMKMDHHCPWINNCCGHQNHASFTLFLL). Cys-129 (S-palmitoyl cysteine intermediate) is an active-site residue. The chain crosses the membrane as a helical span at residues 144 to 164 (FTLFLLLAPLGCTHAAFIFVM). Residues 165–194 (TMYTQLYNRLSFGWNTVKIDMSAARRDPPP) lie on the Lumenal side of the membrane. A helical transmembrane segment spans residues 195-215 (IVPFGLAAFAATLFALGLALG). The Cytoplasmic segment spans residues 216-413 (TTIAVGMLFF…PAPEGEKKNR (198 aa)). One can recognise an SH3 domain in the interval 313–398 (VRSVRYKVIE…PRNCVEKCPC (86 aa)). 3 S-palmitoyl cysteine lipidation sites follow: Cys-328, Cys-329, and Cys-343. The Di-lysine motif motif lies at 410–413 (KKNR).

The protein belongs to the DHHC palmitoyltransferase family. As to quaternary structure, homooligomerizes. Interacts with SELENOK. Post-translationally, palmitoylated at 3 different sites by ZDHHC16. The combination of the different palmitoylation events strongly affects the quaternary assembly of ZDHHC6, its localization, stability and function. Palmitoylation at Cys-328 accelerates the turnover of ZDHHC6. Depalmitoylated by LYPLA2.

Its subcellular location is the endoplasmic reticulum membrane. It carries out the reaction L-cysteinyl-[protein] + hexadecanoyl-CoA = S-hexadecanoyl-L-cysteinyl-[protein] + CoA. The catalysed reaction is L-cysteinyl-[protein] + octadecanoyl-CoA = S-octadecanoyl-L-cysteinyl-[protein] + CoA. Its function is as follows. Endoplasmic reticulum palmitoyl acyltransferase that mediates palmitoylation of proteins such as AMFR, CALX, ITPR1 and TFRC. Palmitoylates calnexin (CALX), which is required for its association with the ribosome-translocon complex and efficient folding of glycosylated proteins. Mediates palmitoylation of AMFR, promoting AMFR distribution to the peripheral endoplasmic reticulum. Together with SELENOK, palmitoylates ITPR1 in immune cells, leading to regulate ITPR1 stability and function. Stearoyltransferase that mediates stearoylation of TFRC to inhibit TFRC-mediated activation of the JNK pathway and mitochondrial fragmentation. The chain is Palmitoyltransferase ZDHHC6 from Mus musculus (Mouse).